A 242-amino-acid polypeptide reads, in one-letter code: Caffeoyl-CoA O-methyltransferase 2 (242 aa).

Residue Lys-16 coordinates substrate. S-adenosyl-L-methionine-binding positions include Thr-58, Glu-80, 82 to 83, Ser-88, Asp-106, and Ala-135; that span reads GV. A substrate-binding site is contributed by Asp-158. Asp-158 is an a divalent metal cation binding site. An S-adenosyl-L-methionine-binding site is contributed by Asp-160. The a divalent metal cation site is built by Asp-184 and Asn-185. Residue Asn-189 participates in substrate binding.

It belongs to the class I-like SAM-binding methyltransferase superfamily. Cation-dependent O-methyltransferase family. CCoAMT subfamily. It depends on Mg(2+) as a cofactor. In terms of tissue distribution, mostly expressed in the bottom and middle parts of the stems.

It carries out the reaction (E)-caffeoyl-CoA + S-adenosyl-L-methionine = (E)-feruloyl-CoA + S-adenosyl-L-homocysteine + H(+). Its pathway is aromatic compound metabolism; phenylpropanoid biosynthesis. In terms of biological role, methylates caffeoyl-CoA to feruloyl-CoA and 5-hydroxyferuloyl-CoA to sinapoyl-CoA. Plays a role in the synthesis of feruloylated polysaccharides. Involved in the reinforcement of the plant cell wall. Also involved in the responding to wounding or pathogen challenge by the increased formation of cell wall-bound ferulic acid polymers. Methylates 5-hydroxyferulolyl-CoA more efficiently than caffeoyl-CoA. The protein is Caffeoyl-CoA O-methyltransferase 2 (CCOAOMT2) of Nicotiana tabacum (Common tobacco).